Here is a 246-residue protein sequence, read N- to C-terminus: Hydroxyacylglutathione hydrolase (246 aa).

Zn(2+) contacts are provided by histidine 58, histidine 60, aspartate 62, histidine 63, histidine 117, aspartate 137, and histidine 175.

Belongs to the metallo-beta-lactamase superfamily. Glyoxalase II family. In terms of assembly, monomer. Zn(2+) serves as cofactor.

It catalyses the reaction an S-(2-hydroxyacyl)glutathione + H2O = a 2-hydroxy carboxylate + glutathione + H(+). The protein operates within secondary metabolite metabolism; methylglyoxal degradation; (R)-lactate from methylglyoxal: step 2/2. Its function is as follows. Thiolesterase that catalyzes the hydrolysis of S-D-lactoyl-glutathione to form glutathione and D-lactic acid. The polypeptide is Hydroxyacylglutathione hydrolase (Prochlorococcus marinus (strain MIT 9312)).